We begin with the raw amino-acid sequence, 542 residues long: Exopolysaccharide phosphotransferase CpsY (542 aa).

The segment at 522–542 (SPTVSAPLEDGQTANPAQTAR) is disordered. A compositionally biased stretch (polar residues) spans 533–542 (QTANPAQTAR).

Belongs to the stealth family.

This chain is Exopolysaccharide phosphotransferase CpsY (cpsY), found in Mycobacterium leprae (strain TN).